Consider the following 365-residue polypeptide: MTDPSQVKPKHVMMMAAGTGGHVFPALAVAKQLQQHGCQVSWLATPAGMENRLLKDQNIPIYQIDIQGVRGNGAVRKLLAPFKILKATYSAMRYMKQLKVDAVAGFGGYVAGPGGLAARILGIPILIHEQNAVAGFTNTQLARVASKVCEAFPNTFPASAKRVTTGNPVRKEITAILSPKWRYDSREQAGQPLNILIVGGSLGAQALNERLPDALKNLNLPLNVFHQCGQKQFEETRVRYTNAPANMSVQVMPFIEDMAQAYRDADLIICRAGALTVTEVATAGVAAVFVPLPIAVDDHQTANARFLADVGAAKICQQSTMTPENLDALLKPLMNRQLLSEMAVKARQHAQPNATQHVVDLIQTL.

UDP-N-acetyl-alpha-D-glucosamine-binding positions include 19 to 21 (TGG), Asn-131, Arg-170, Ser-201, Ile-255, 274 to 279 (ALTVTE), and Gln-300.

The protein belongs to the glycosyltransferase 28 family. MurG subfamily.

It localises to the cell inner membrane. The catalysed reaction is di-trans,octa-cis-undecaprenyl diphospho-N-acetyl-alpha-D-muramoyl-L-alanyl-D-glutamyl-meso-2,6-diaminopimeloyl-D-alanyl-D-alanine + UDP-N-acetyl-alpha-D-glucosamine = di-trans,octa-cis-undecaprenyl diphospho-[N-acetyl-alpha-D-glucosaminyl-(1-&gt;4)]-N-acetyl-alpha-D-muramoyl-L-alanyl-D-glutamyl-meso-2,6-diaminopimeloyl-D-alanyl-D-alanine + UDP + H(+). It functions in the pathway cell wall biogenesis; peptidoglycan biosynthesis. Its function is as follows. Cell wall formation. Catalyzes the transfer of a GlcNAc subunit on undecaprenyl-pyrophosphoryl-MurNAc-pentapeptide (lipid intermediate I) to form undecaprenyl-pyrophosphoryl-MurNAc-(pentapeptide)GlcNAc (lipid intermediate II). The polypeptide is UDP-N-acetylglucosamine--N-acetylmuramyl-(pentapeptide) pyrophosphoryl-undecaprenol N-acetylglucosamine transferase (Acinetobacter baylyi (strain ATCC 33305 / BD413 / ADP1)).